The sequence spans 686 residues: X-linked interleukin-1 receptor accessory protein-like 2 (686 aa).

The N-terminal stretch at 1–16 is a signal peptide; that stretch reads MKLPLLLALVVCSAVS. At 17-354 the chain is on the extracellular side; it reads TNLKMVSKRN…LLRKKDLIYK (338 aa). Positions 32-132 constitute an Ig-like C2-type 1 domain; sequence IDWSVDLKTY…YCMKVSMSLT (101 aa). Cys-53 and Cys-116 form a disulfide bridge. 5 N-linked (GlcNAc...) asparagine glycosylation sites follow: Asn-63, Asn-120, Asn-136, Asn-211, and Asn-328. 2 Ig-like C2-type domains span residues 141–232 and 239–347; these read CYNS…LKVT and PPKP…VLLR. 2 cysteine pairs are disulfide-bonded: Cys-162–Cys-214 and Cys-265–Cys-331. Residues 355 to 375 traverse the membrane as a helical segment; sequence IELAGGLGAIFLLLILLLVVY. Residues 376–686 are Cytoplasmic-facing; it reads KCYNIELMLF…KELSFTSDIW (311 aa). The TIR domain maps to 400–556; sequence KEYDAYLSYT…KFWKHLVYEM (157 aa). Glu-488 is an active-site residue.

The protein belongs to the interleukin-1 receptor family. In terms of tissue distribution, detected in fetal brain after day 12.5, in particular in parts of the diencephalon and in the basal plate of the spinal cord. In postnatal brain detected in cerebral cortex, olfactory bulb, in the CA1 region of the hippocampus and in Purkinje cells of the Xth cerebellar lobule.

The protein localises to the membrane. It catalyses the reaction NAD(+) + H2O = ADP-D-ribose + nicotinamide + H(+). The chain is X-linked interleukin-1 receptor accessory protein-like 2 (Il1rapl2) from Mus musculus (Mouse).